Consider the following 516-residue polypeptide: UDP-N-acetylmuramyl-tripeptide synthetase (516 aa).

UDP-N-acetyl-alpha-D-muramoyl-L-alanyl-D-glutamate is bound at residue S38. Residue 116-122 participates in ATP binding; the sequence is GTKGKTT. UDP-N-acetyl-alpha-D-muramoyl-L-alanyl-D-glutamate contacts are provided by residues 162 to 163, S189, and R197; that span reads TT. Residue K231 is modified to N6-carboxylysine.

Belongs to the MurCDEF family. MurE subfamily. Post-translationally, carboxylation is probably crucial for Mg(2+) binding and, consequently, for the gamma-phosphate positioning of ATP.

Its subcellular location is the cytoplasm. It functions in the pathway cell wall biogenesis; peptidoglycan biosynthesis. Functionally, catalyzes the addition of an amino acid to the nucleotide precursor UDP-N-acetylmuramoyl-L-alanyl-D-glutamate (UMAG) in the biosynthesis of bacterial cell-wall peptidoglycan. The sequence is that of UDP-N-acetylmuramyl-tripeptide synthetase from Lactobacillus delbrueckii subsp. bulgaricus (strain ATCC 11842 / DSM 20081 / BCRC 10696 / JCM 1002 / NBRC 13953 / NCIMB 11778 / NCTC 12712 / WDCM 00102 / Lb 14).